Here is a 469-residue protein sequence, read N- to C-terminus: MSITLLCLIKGNTLANAFPVDIDKDQLVGHLKKVIKAEQPQTFANVDAKDLKLWRVPISDDHDDQLRNLSLEDSDELLAIRKISKYFPDSPPEECIHVLVEPPESTATSEVLKLREEVASLQALLNKSVAFDVVVSPKRTKGFKWTVNIEQATLDGLKEHIRKMEKPPALENDGAVLNIVNESGKYSPLNDQDLREMLQLFVSNKNLKFTVFIETPSKAFSDWTFSSVCQLYGLNGETEDPTMTVFPNFSCGNVKPSQESLEGLMAELKSRLDNTPISLLSVEATKSLYVYSYLLAGANNFKGKFEIRPQKVISGPNGHGPLDFAIDLCQTAKTVGVTEVKKDDFVKGVAQCAVQLESSLSYRKRKADEMEERTFGRVFGIVTDAEKFYFMECSMDDQDRPSFKLSKPVTVVYEDNDLQTKVEKVLEHIVWLLEEAQKPDSALDVKEREIKRVRSGELPKVTDLEGKTN.

Residues 1–17 (MSITLLCLIKGNTLANA) form the signal peptide. The interval 18-57 (FPVDIDKDQLVGHLKKVIKAEQPQTFANVDAKDLKLWRVP) is LQLFLAK-like domain. Residues 58–96 (ISDDHDDQLRNLSLEDSDELLAIRKISKYFPDSPPEECI) are DWL domain. N-linked (GlcNAc...) asparagine glycosylation occurs at Asn68. The HVLVXXP motif motif lies at 97-103 (HVLVEPP). Asn126, Asn181, and Asn248 each carry an N-linked (GlcNAc...) asparagine glycan.

This sequence belongs to the Crinkler effector family. In terms of assembly, homodimer.

It localises to the secreted. The protein localises to the host nucleus. Its function is as follows. Effector that participates in the arbuscule development step of the symbiosis. Arbuscular mycorrhizal (AM) symbiosis is one of the most prominent and beneficial plant-microbe interactions that facilitates mineral nutrition and confers tolerance to biotic and abiotic stresses. Is not involved in cell death processes. This Rhizophagus irregularis (strain DAOM 181602 / DAOM 197198 / MUCL 43194) (Arbuscular mycorrhizal fungus) protein is Crinkler effector protein 1.